Reading from the N-terminus, the 118-residue chain is Ribonuclease P protein component (118 aa).

It belongs to the RnpA family. As to quaternary structure, consists of a catalytic RNA component (M1 or rnpB) and a protein subunit.

The enzyme catalyses Endonucleolytic cleavage of RNA, removing 5'-extranucleotides from tRNA precursor.. In terms of biological role, RNaseP catalyzes the removal of the 5'-leader sequence from pre-tRNA to produce the mature 5'-terminus. It can also cleave other RNA substrates such as 4.5S RNA. The protein component plays an auxiliary but essential role in vivo by binding to the 5'-leader sequence and broadening the substrate specificity of the ribozyme. This chain is Ribonuclease P protein component, found in Bifidobacterium animalis subsp. lactis (strain AD011).